A 272-amino-acid polypeptide reads, in one-letter code: Energy-coupling factor transporter ATP-binding protein EcfA1 (272 aa).

Residues 2 to 237 enclose the ABC transporter domain; sequence IKVSDVCFSY…KNIIEKAKID (236 aa). 37–44 contributes to the ATP binding site; the sequence is GHNGSGKS.

It belongs to the ABC transporter superfamily. Energy-coupling factor EcfA family. In terms of assembly, forms a stable energy-coupling factor (ECF) transporter complex composed of 2 membrane-embedded substrate-binding proteins (S component), 2 ATP-binding proteins (A component) and 2 transmembrane proteins (T component).

It localises to the cell membrane. Its function is as follows. ATP-binding (A) component of a common energy-coupling factor (ECF) ABC-transporter complex. Unlike classic ABC transporters this ECF transporter provides the energy necessary to transport a number of different substrates. This chain is Energy-coupling factor transporter ATP-binding protein EcfA1, found in Mesomycoplasma hyopneumoniae (strain 7448) (Mycoplasma hyopneumoniae).